A 120-amino-acid polypeptide reads, in one-letter code: Photosystem II extrinsic protein U (120 aa).

A signal peptide spans 1–29; it reads MKRLLSLLTGVLVMTGLLMALIFPQSAYA.

It belongs to the PsbU family. As to quaternary structure, PSII is composed of 1 copy each of membrane proteins PsbA, PsbB, PsbC, PsbD, PsbE, PsbF, PsbH, PsbI, PsbJ, PsbK, PsbL, PsbM, PsbT, PsbX, PsbY, Psb30/Ycf12, peripheral proteins PsbO, CyanoQ (PsbQ), PsbU, PsbV and a large number of cofactors. It forms dimeric complexes.

The protein localises to the cellular thylakoid membrane. In terms of biological role, one of the extrinsic, lumenal subunits of photosystem II (PSII). PSII is a light-driven water plastoquinone oxidoreductase, using light energy to abstract electrons from H(2)O, generating a proton gradient subsequently used for ATP formation. The extrinsic proteins stabilize the structure of photosystem II oxygen-evolving complex (OEC), the ion environment of oxygen evolution and protect the OEC against heat-induced inactivation. The chain is Photosystem II extrinsic protein U from Prochlorococcus marinus (strain MIT 9303).